A 167-amino-acid polypeptide reads, in one-letter code: Chorion class CB protein PC404 (167 aa).

Residues 1–55 (IGREAIVGAGLQGPFGGPWPYDALSPFDMPYGPALPAMSCGAGSFGPSSGFAPAA) form a left arm region. The interval 56 to 126 (AYGGGLAVTS…GDGAVGIVAE (71 aa)) is central domain. The interval 127–167 (TPFASTSVNPAYGYGGAIGGGVPYNSYGPIGYGGCGYNALY) is right arm.

It belongs to the chorion protein family.

This protein is one of many from the eggshell of the silk moth. The polypeptide is Chorion class CB protein PC404 (Antheraea polyphemus (Polyphemus moth)).